Here is a 501-residue protein sequence, read N- to C-terminus: MDVFGDEAFNVPDSTDWLGTPLACLMPVEQAFRCHVCKDFYDSPMLTSCNHTFCSLCIRRCLSVDSKCPLCRATDQESKLRGNWALREAVEAFKNSRKVLLEFARTPPTIQAILPDQAGPSSPSKRKATEMEGPKEEDPESKRPRRSTRSTRARAAELTAAILQEEQDTTPSADPDYVDQPPDDGLVACPICLTRMKEQQVDRHLDTSCPGSPQAASKRRPIPAQTPQPSTFPSFNTRLTSQTNQKPPERLPALAYSMLRDTALRKKLSELGLSTHGSRQLLEKRHKEWITLWNANCDSSRPKKRSELLRDLDEWERTVGNPGTAAGGGGGQQGLGLMARAQATGAQIKDKEFDGKAWATRYGGSFGDLIKQARQGIKRQTLDGNGEKADTKGGGGGEDVGPAELPTLQAREGESSAAPTRMDIVPPSSPPRPGQVDDADTEHDGQAPGKDAIAEDTAMREQVIPGTPDKERQWETSQQQQPPIPGDAQLSGMKKPNPETC.

The RING-type zinc finger occupies cysteine 34–arginine 72. Positions glutamine 111 to arginine 154 are disordered. Basic and acidic residues predominate over residues lysine 127 to lysine 142. A compositionally biased stretch (basic residues) spans arginine 143–arginine 152. The UBZ4-type zinc-finger motif lies at leucine 186 to glutamine 214. Positions 189, 192, 204, and 209 each coordinate Zn(2+). The tract at residues arginine 203–arginine 250 is disordered. Polar residues predominate over residues glutamine 225–lysine 246. Positions tyrosine 256–isoleucine 290 constitute an SAP domain. Residues isoleucine 377–cysteine 501 form a disordered region.

The protein belongs to the RAD18 family. Interacts with E2 mus-8/ubc2, forming a complex with ubiquitin ligase activity.

The protein localises to the nucleus. It catalyses the reaction S-ubiquitinyl-[E2 ubiquitin-conjugating enzyme]-L-cysteine + [acceptor protein]-L-lysine = [E2 ubiquitin-conjugating enzyme]-L-cysteine + N(6)-ubiquitinyl-[acceptor protein]-L-lysine.. It functions in the pathway protein modification; protein ubiquitination. Its function is as follows. E3 RING-finger protein, member of the UBC2/RAD6 epistasis group. Associates to the E2 ubiquitin conjugating enzyme mus-8/ubc2 to form the mus-8/ubc2-uvs-2/rad18 ubiquitin ligase complex involved in postreplicative repair (PRR) of damaged DNA. This chain is Postreplication repair E3 ubiquitin-protein ligase rad18 (uvs-2), found in Neurospora crassa (strain ATCC 24698 / 74-OR23-1A / CBS 708.71 / DSM 1257 / FGSC 987).